Reading from the N-terminus, the 219-residue chain is Virginiamycin A acetyltransferase (219 aa).

His87 is a catalytic residue.

The protein belongs to the transferase hexapeptide repeat family.

Inactivates the A compounds of virginiamycin-like antibiotics, thus providing resistance to these antibiotics. This chain is Virginiamycin A acetyltransferase (vat), found in Staphylococcus aureus.